We begin with the raw amino-acid sequence, 103 residues long: Histone H4 (103 aa).

The segment covering 1–14 has biased composition (gly residues); the sequence is MSGRGKGGKGLGKG. Positions 1 to 20 are disordered; it reads MSGRGKGGKGLGKGGAKRHR. Lysine 6, lysine 9, lysine 13, lysine 17, lysine 32, and lysine 45 each carry N6-(2-hydroxyisobutyryl)lysine; alternate. Lysine 6 bears the N6-acetyl-N6-methyllysine; alternate mark. N6-butyryllysine; alternate occurs at positions 6, 9, 13, 17, 32, and 45. Position 6 is an N6-glutaryllysine; alternate (lysine 6). Residue lysine 9 is modified to N6-propionyllysine; alternate. An N6-acetyl-N6-methyllysine; alternate modification is found at lysine 13. Lysine 13 carries the post-translational modification N6-glutaryllysine; alternate. Lysine 17, lysine 32, and lysine 45 each carry N6-propionyllysine; alternate. The DNA-binding element occupies 17–21; it reads KRHRK. N6-glutaryllysine; alternate is present on lysine 32. Residue lysine 32 is modified to N6-succinyllysine; alternate. 4 positions are modified to N6-glutaryllysine; alternate: lysine 60, lysine 78, lysine 80, and lysine 92. An N6-(2-hydroxyisobutyryl)lysine modification is found at lysine 60. Lysine 78, lysine 80, and lysine 92 each carry N6-(2-hydroxyisobutyryl)lysine; alternate. Lysine 78, lysine 80, and lysine 92 each carry N6-butyryllysine; alternate. N6-propionyllysine; alternate is present on residues lysine 78, lysine 80, and lysine 92. The residue at position 78 (lysine 78) is an N6-succinyllysine. Lysine 92 is subject to N6-succinyllysine; alternate.

The protein belongs to the histone H4 family. The nucleosome is a histone octamer containing two molecules each of H2A, H2B, H3 and H4 assembled in one H3-H4 heterotetramer and two H2A-H2B heterodimers. The octamer wraps approximately 147 bp of DNA. Post-translationally, butyrylation of histones marks active promoters and competes with histone acetylation. Glutarylation at Lys-92 (H4K91glu) destabilizes nucleosomes by promoting dissociation of the H2A-H2B dimers from nucleosomes.

It is found in the nucleus. The protein resides in the chromosome. Core component of nucleosome. Nucleosomes wrap and compact DNA into chromatin, limiting DNA accessibility to the cellular machineries which require DNA as a template. Histones thereby play a central role in transcription regulation, DNA repair, DNA replication and chromosomal stability. DNA accessibility is regulated via a complex set of post-translational modifications of histones, also called histone code, and nucleosome remodeling. This chain is Histone H4 (H4.1), found in Oikopleura dioica (Tunicate).